A 262-amino-acid chain; its full sequence is Type III pantothenate kinase (262 aa).

9–16 (DAGNSRIK) provides a ligand contact to ATP. Substrate-binding positions include Tyr-96 and 103–106 (GSDR). Catalysis depends on Asp-105, which acts as the Proton acceptor. ATP is bound at residue Thr-129. Thr-189 is a binding site for substrate.

The protein belongs to the type III pantothenate kinase family. In terms of assembly, homodimer. NH4(+) serves as cofactor. K(+) is required as a cofactor.

It is found in the cytoplasm. It carries out the reaction (R)-pantothenate + ATP = (R)-4'-phosphopantothenate + ADP + H(+). The protein operates within cofactor biosynthesis; coenzyme A biosynthesis; CoA from (R)-pantothenate: step 1/5. Its function is as follows. Catalyzes the phosphorylation of pantothenate (Pan), the first step in CoA biosynthesis. This is Type III pantothenate kinase from Burkholderia multivorans (strain ATCC 17616 / 249).